The sequence spans 452 residues: MQSSFKTVPFTPDFYSQSSYFFRGDSCLEEFHQPVNGFHHEEAIDLSPNVTIASANLHYTTFDTVMDCGGGGGGGLRERLEGGEEECLDTGQLVYQKGTRLVGGGVGEVNSSWCDSVSAMADNSQHTDTSTDIDTDDKTQLNGGHQGMLLATNCSDQSNVKSSDQRTLRRLAQNREAARKSRLRKKAYVQQLENSRIRLAQLEEELKRARQQGSLVERGVSADHTHLAAGNGVFSFELEYTRWKEEHQRMINDLRSGVNSQLGDNDLRVLVDAVMSHYDEIFRLKGIGTKVDVFHMLSGMWKTPAERFFMWLGGFRSSELLKILGNHVDPLTDQQLIGICNLQQSSQQAEDALSQGMEALQQSLLETLSSASMGPNSSANVADYMGHMAMAMGKLGTLENFLRQADLLRQQTLQQLHRILTTRQAARAFLVIHDYISRLRALSSLWLARPRD.

Residues Asp164–Leu227 enclose the bZIP domain. The basic motif stretch occupies residues Arg166–Lys186. A leucine-zipper region spans residues Leu192–Leu206. The region spanning Val233–Arg449 is the DOG1 domain.

It belongs to the bZIP family. Interacts with GRXC7/ROXY1. Interacts with BOP1 and BOP2.

The protein resides in the nucleus. Functionally, transcriptional activator involved in the determination of floral organ number. Acts to determine floral organ patterning by establishing floral organ primordia in specific numbers and positions. Plays a role in regulating stem cell fate by directly controlling AG expression. Binds to the 5'-AAGAAT-3' cis-acting element found in AG promoter. Might represent a target for a post-translational modification by GRXC7/ROXY1. This is Transcription factor PERIANTHIA (PAN) from Arabidopsis thaliana (Mouse-ear cress).